A 513-amino-acid polypeptide reads, in one-letter code: ATP synthase subunit alpha (513 aa).

Position 169-176 (169-176 (GDRQTGKT)) interacts with ATP.

Belongs to the ATPase alpha/beta chains family. As to quaternary structure, F-type ATPases have 2 components, CF(1) - the catalytic core - and CF(0) - the membrane proton channel. CF(1) has five subunits: alpha(3), beta(3), gamma(1), delta(1), epsilon(1). CF(0) has three main subunits: a(1), b(2) and c(9-12). The alpha and beta chains form an alternating ring which encloses part of the gamma chain. CF(1) is attached to CF(0) by a central stalk formed by the gamma and epsilon chains, while a peripheral stalk is formed by the delta and b chains.

It localises to the cell inner membrane. It catalyses the reaction ATP + H2O + 4 H(+)(in) = ADP + phosphate + 5 H(+)(out). Functionally, produces ATP from ADP in the presence of a proton gradient across the membrane. The alpha chain is a regulatory subunit. This is ATP synthase subunit alpha from Shigella boydii serotype 18 (strain CDC 3083-94 / BS512).